Consider the following 245-residue polypeptide: Superoxide dismutase 1 copper chaperone (245 aa).

In terms of domain architecture, HMA spans 8–71; the sequence is DFEATYAVEM…ALKNCGRDGI (64 aa). Cu cation-binding residues include cysteine 19 and cysteine 22. Cysteine 29 and cysteine 66 form a disulfide bridge. Cysteine 224 and cysteine 226 together coordinate Cu cation.

Belongs to the CCS1 family. Requires Cu(2+) as cofactor.

Its subcellular location is the cytoplasm. Copper chaperone for superoxide dismutase 1 (SOD1). Binds copper ions and delivers them specifically to SOD1. The chain is Superoxide dismutase 1 copper chaperone (CCS1) from Kluyveromyces lactis (strain ATCC 8585 / CBS 2359 / DSM 70799 / NBRC 1267 / NRRL Y-1140 / WM37) (Yeast).